A 310-amino-acid polypeptide reads, in one-letter code: Ornithine carbamoyltransferase (310 aa).

Residues 58–61, Gln85, Arg109, and 136–139 contribute to the carbamoyl phosphate site; these read STRT and HPCQ. Residues Asn167, Asp227, and 231-232 each bind L-ornithine; that span reads SM. Carbamoyl phosphate is bound by residues 266–267 and Arg294; that span reads CL.

Belongs to the aspartate/ornithine carbamoyltransferase superfamily. OTCase family.

The protein localises to the cytoplasm. It catalyses the reaction carbamoyl phosphate + L-ornithine = L-citrulline + phosphate + H(+). It participates in amino-acid biosynthesis; L-arginine biosynthesis; L-arginine from L-ornithine and carbamoyl phosphate: step 1/3. In terms of biological role, reversibly catalyzes the transfer of the carbamoyl group from carbamoyl phosphate (CP) to the N(epsilon) atom of ornithine (ORN) to produce L-citrulline. This is Ornithine carbamoyltransferase from Rhodopseudomonas palustris (strain ATCC BAA-98 / CGA009).